Reading from the N-terminus, the 136-residue chain is Holo-[acyl-carrier-protein] synthase (136 aa).

Residues D8 and E57 each contribute to the Mg(2+) site.

This sequence belongs to the P-Pant transferase superfamily. AcpS family. Mg(2+) is required as a cofactor.

Its subcellular location is the cytoplasm. The catalysed reaction is apo-[ACP] + CoA = holo-[ACP] + adenosine 3',5'-bisphosphate + H(+). In terms of biological role, transfers the 4'-phosphopantetheine moiety from coenzyme A to a Ser of acyl-carrier-protein. The sequence is that of Holo-[acyl-carrier-protein] synthase from Methylorubrum populi (strain ATCC BAA-705 / NCIMB 13946 / BJ001) (Methylobacterium populi).